The chain runs to 359 residues: Peptide chain release factor 1 (359 aa).

Gln-234 bears the N5-methylglutamine mark. Residues 283-305 (SQKDAARAADRRAQVGSGDRSER) are disordered.

It belongs to the prokaryotic/mitochondrial release factor family. Post-translationally, methylated by PrmC. Methylation increases the termination efficiency of RF1.

Its subcellular location is the cytoplasm. Its function is as follows. Peptide chain release factor 1 directs the termination of translation in response to the peptide chain termination codons UAG and UAA. This Methylobacterium nodulans (strain LMG 21967 / CNCM I-2342 / ORS 2060) protein is Peptide chain release factor 1.